The chain runs to 905 residues: Alanine--tRNA ligase (905 aa).

Zn(2+) contacts are provided by histidine 582, histidine 586, cysteine 687, and histidine 691.

This sequence belongs to the class-II aminoacyl-tRNA synthetase family. The cofactor is Zn(2+).

Its subcellular location is the cytoplasm. It catalyses the reaction tRNA(Ala) + L-alanine + ATP = L-alanyl-tRNA(Ala) + AMP + diphosphate. Functionally, catalyzes the attachment of alanine to tRNA(Ala) in a two-step reaction: alanine is first activated by ATP to form Ala-AMP and then transferred to the acceptor end of tRNA(Ala). Also edits incorrectly charged Ser-tRNA(Ala) and Gly-tRNA(Ala) via its editing domain. The sequence is that of Alanine--tRNA ligase from Mycoplasma mobile (strain ATCC 43663 / 163K / NCTC 11711) (Mesomycoplasma mobile).